The sequence spans 81 residues: Putative defensin-like protein 102 (81 aa).

The signal sequence occupies residues 1 to 24; the sequence is MTTTMKTFVAFVLTVFFIMSSAHC. 4 cysteine pairs are disulfide-bonded: Cys-43–Cys-78, Cys-49–Cys-71, Cys-57–Cys-76, and Cys-61–Cys-77.

It belongs to the DEFL family.

It is found in the secreted. The sequence is that of Putative defensin-like protein 102 from Arabidopsis thaliana (Mouse-ear cress).